The primary structure comprises 445 residues: 3-phosphoshikimate 1-carboxyvinyltransferase (445 aa).

The tract at residues 1–25 (MSHSDQTSPLEARKSAALSGTARVP) is disordered. 3-phosphoshikimate-binding residues include K28, S29, and R33. K28 provides a ligand contact to phosphoenolpyruvate. Phosphoenolpyruvate is bound by residues G101 and R129. Residues S175, Q177, D328, and K355 each coordinate 3-phosphoshikimate. Q177 contacts phosphoenolpyruvate. The active-site Proton acceptor is D328. Phosphoenolpyruvate contacts are provided by R359 and R402.

The protein belongs to the EPSP synthase family. In terms of assembly, monomer.

Its subcellular location is the cytoplasm. It carries out the reaction 3-phosphoshikimate + phosphoenolpyruvate = 5-O-(1-carboxyvinyl)-3-phosphoshikimate + phosphate. It participates in metabolic intermediate biosynthesis; chorismate biosynthesis; chorismate from D-erythrose 4-phosphate and phosphoenolpyruvate: step 6/7. In terms of biological role, catalyzes the transfer of the enolpyruvyl moiety of phosphoenolpyruvate (PEP) to the 5-hydroxyl of shikimate-3-phosphate (S3P) to produce enolpyruvyl shikimate-3-phosphate and inorganic phosphate. This is 3-phosphoshikimate 1-carboxyvinyltransferase from Rhodopseudomonas palustris (strain BisB5).